The primary structure comprises 375 residues: Secondary metabolism regulator laeA (375 aa).

Residues 15–26 (ASPNRNNYSYQG) are compositionally biased toward polar residues. Disordered regions lie at residues 15–37 (ASPN…RSRQ) and 50–75 (QEPP…TSHY).

This sequence belongs to the methyltransferase superfamily. LaeA methyltransferase family. As to quaternary structure, component of the heterotrimeric velvet complex composed of laeA, veA and velB; VeA acting as a bridging protein between laeA and velB.

The protein localises to the nucleus. It catalyses the reaction L-methionyl-[protein] + S-adenosyl-L-methionine = S-methyl-L-methionyl-[protein] + S-adenosyl-L-homocysteine. In terms of biological role, methyltransferase that performs automethylation. No other methyl-accepting substrate has been identified yet. Component of the velvet transcription factor complex that acts as a global regulator for secondary metabolite gene expression. Controls the expression of the citric acid, demethylkotanin, orlandin, asperrubrol, tensidol B, atromentin and JBIR8 gene clusters. Also represses the expression of genes related to the production of BMS-192548 and aspernigrin A. The polypeptide is Secondary metabolism regulator laeA (Aspergillus niger (strain ATCC 1015 / CBS 113.46 / FGSC A1144 / LSHB Ac4 / NCTC 3858a / NRRL 328 / USDA 3528.7)).